Consider the following 518-residue polypeptide: Organic cation/carnitine transporter 3 (518 aa).

A disordered region spans residues Met-1–Arg-23. The Cytoplasmic portion of the chain corresponds to Met-1–Cys-32. The helical transmembrane segment at Ile-33 to Phe-53 threads the bilayer. Topologically, residues Asp-54 to Gly-122 are extracellular. 2 N-linked (GlcNAc...) asparagine glycosylation sites follow: Asn-83 and Asn-94. A helical transmembrane segment spans residues Phe-123 to Ala-143. The Cytoplasmic segment spans residues Asp-144–Cys-157. The helical transmembrane segment at Leu-158–Phe-178 threads the bilayer. The Extracellular portion of the chain corresponds to Leu-179 to Arg-180. The chain crosses the membrane as a helical span at residues Phe-181–Leu-197. ATP is bound at residue Ser-198–Lys-205. Over Ser-198 to Val-210 the chain is Cytoplasmic. The helical transmembrane segment at Gly-211–Ile-231 threads the bilayer. The Extracellular segment spans residues Asn-232 to Asn-239. Residues Leu-240 to Val-259 traverse the membrane as a helical segment. At Arg-260–Arg-325 the chain is on the cytoplasmic side. Residues Leu-326–Ala-346 form a helical membrane-spanning segment. Residues Leu-347–Tyr-355 lie on the Extracellular side of the membrane. A helical membrane pass occupies residues Leu-356–Ile-376. Residues Asp-377 to Asp-383 lie on the Cytoplasmic side of the membrane. The helical transmembrane segment at Ala-384–Gln-404 threads the bilayer. Residues Gln-405–Gln-410 lie on the Extracellular side of the membrane. Residues Ile-411 to Tyr-431 form a helical membrane-spanning segment. Residues Thr-432–Ser-443 are Cytoplasmic-facing. Residues Ala-444–Ala-464 form a helical membrane-spanning segment. Topologically, residues Ala-465–Gln-470 are extracellular. A helical transmembrane segment spans residues Phe-471–Leu-491. Topologically, residues Pro-492–Gly-518 are cytoplasmic.

Belongs to the major facilitator (TC 2.A.1) superfamily. Organic cation transporter (TC 2.A.1.19) family. In terms of tissue distribution, mostly expressed in siliques, mainly in young seeds. Present in stems (cortical cells and parenchyma cells), at the basis of secondary inflorescences, and at the base of trichomes.

It localises to the vacuole membrane. In terms of biological role, high affinity carnitine transporter involved in the active cellular uptake of carnitine. Also transports organic cations. The sequence is that of Organic cation/carnitine transporter 3 (OCT3) from Arabidopsis thaliana (Mouse-ear cress).